Here is a 260-residue protein sequence, read N- to C-terminus: Hydroxyacylglutathione hydrolase (260 aa).

The Zn(2+) site is built by His66, His68, Asp70, His71, His125, Asp150, and His188.

This sequence belongs to the metallo-beta-lactamase superfamily. Glyoxalase II family. As to quaternary structure, monomer. Zn(2+) serves as cofactor.

It carries out the reaction an S-(2-hydroxyacyl)glutathione + H2O = a 2-hydroxy carboxylate + glutathione + H(+). The protein operates within secondary metabolite metabolism; methylglyoxal degradation; (R)-lactate from methylglyoxal: step 2/2. In terms of biological role, thiolesterase that catalyzes the hydrolysis of S-D-lactoyl-glutathione to form glutathione and D-lactic acid. This is Hydroxyacylglutathione hydrolase from Prochlorococcus marinus (strain MIT 9303).